The following is a 147-amino-acid chain: Fibromodulin (147 aa).

6 LRR repeats span residues 1–15, 16–37, 40–61, 63–84, 85–105, and 108–128; these read LDHN…PLPR, SLRE…ALEG, NLTA…MRGL, SLIL…LPSA, LEQL…YFRG, and KLLY…ASNT. The N-linked (GlcNAc...) (keratan sulfate) asparagine glycan is linked to asparagine 5. The N-linked (GlcNAc...) (keratan sulfate) asparagine glycan is linked to asparagine 40. Asparagine 130 carries an N-linked (GlcNAc...) (keratan sulfate) asparagine glycan. The stretch at 133–147 is one LRR 7 repeat; the sequence is SLLELDLSYNQLQKI.

This sequence belongs to the small leucine-rich proteoglycan (SLRP) family. SLRP class II subfamily. Binds to type I and type II collagen. Binds keratan sulfate chains.

The protein resides in the secreted. It localises to the extracellular space. Its subcellular location is the extracellular matrix. Functionally, affects the rate of fibrils formation. May have a primary role in collagen fibrillogenesis. The polypeptide is Fibromodulin (FMOD) (Sus scrofa (Pig)).